The sequence spans 600 residues: ATP-dependent lipid A-core flippase (600 aa).

4 helical membrane-spanning segments follow: residues 26–46, 82–102, 167–187, and 266–286; these read VGIFLLSILGFVIFASTQPML, LLIVLIAAWQGLGSFLGNYFL, VFLFIYLLMMNWKLTLVMLAI, and PMLQLVIYSAMAVLMFLVLFL. The ABC transmembrane type-1 domain occupies 30-321; sequence LLSILGFVIF…LSEVSSTIQK (292 aa). The ABC transporter domain maps to 353 to 589; sequence LEVKNLSFFY…NGYYARLHAM (237 aa). 387–394 contacts ATP; the sequence is GRSGSGKS.

It belongs to the ABC transporter superfamily. Lipid exporter (TC 3.A.1.106) family. Homodimer.

It localises to the cell inner membrane. The enzyme catalyses ATP + H2O + lipid A-core oligosaccharideSide 1 = ADP + phosphate + lipid A-core oligosaccharideSide 2.. In terms of biological role, involved in lipopolysaccharide (LPS) biosynthesis. Translocates lipid A-core from the inner to the outer leaflet of the inner membrane. Transmembrane domains (TMD) form a pore in the inner membrane and the ATP-binding domain (NBD) is responsible for energy generation. The sequence is that of ATP-dependent lipid A-core flippase from Pseudomonas syringae pv. tomato (strain ATCC BAA-871 / DC3000).